The chain runs to 462 residues: Bifunctional protein GlmU (462 aa).

Residues 1–239 (MTESVSKPVR…EASVQGVNAQ (239 aa)) are pyrophosphorylase. Residues 17–20 (LAAG), Lys-31, Gln-84, and 89–90 (GT) each bind UDP-N-acetyl-alpha-D-glucosamine. Asp-114 is a binding site for Mg(2+). UDP-N-acetyl-alpha-D-glucosamine is bound by residues Gly-150, Glu-165, Asn-180, and Asn-237. Asn-237 serves as a coordination point for Mg(2+). A linker region spans residues 240 to 260 (AELAAAEAVWQQNRRKALMVD). The segment at 261–462 (GVTMPAPDTV…QKDKKKDKKA (202 aa)) is N-acetyltransferase. UDP-N-acetyl-alpha-D-glucosamine-binding residues include Arg-326 and Lys-344. The active-site Proton acceptor is the His-356. Positions 359 and 370 each coordinate UDP-N-acetyl-alpha-D-glucosamine. Residues Ala-373, 379 to 380 (NY), Ser-398, Ser-416, and Arg-433 contribute to the acetyl-CoA site.

In the N-terminal section; belongs to the N-acetylglucosamine-1-phosphate uridyltransferase family. It in the C-terminal section; belongs to the transferase hexapeptide repeat family. As to quaternary structure, homotrimer. Mg(2+) is required as a cofactor.

It localises to the cytoplasm. The catalysed reaction is alpha-D-glucosamine 1-phosphate + acetyl-CoA = N-acetyl-alpha-D-glucosamine 1-phosphate + CoA + H(+). The enzyme catalyses N-acetyl-alpha-D-glucosamine 1-phosphate + UTP + H(+) = UDP-N-acetyl-alpha-D-glucosamine + diphosphate. It participates in nucleotide-sugar biosynthesis; UDP-N-acetyl-alpha-D-glucosamine biosynthesis; N-acetyl-alpha-D-glucosamine 1-phosphate from alpha-D-glucosamine 6-phosphate (route II): step 2/2. The protein operates within nucleotide-sugar biosynthesis; UDP-N-acetyl-alpha-D-glucosamine biosynthesis; UDP-N-acetyl-alpha-D-glucosamine from N-acetyl-alpha-D-glucosamine 1-phosphate: step 1/1. It functions in the pathway bacterial outer membrane biogenesis; LPS lipid A biosynthesis. Functionally, catalyzes the last two sequential reactions in the de novo biosynthetic pathway for UDP-N-acetylglucosamine (UDP-GlcNAc). The C-terminal domain catalyzes the transfer of acetyl group from acetyl coenzyme A to glucosamine-1-phosphate (GlcN-1-P) to produce N-acetylglucosamine-1-phosphate (GlcNAc-1-P), which is converted into UDP-GlcNAc by the transfer of uridine 5-monophosphate (from uridine 5-triphosphate), a reaction catalyzed by the N-terminal domain. This chain is Bifunctional protein GlmU, found in Caulobacter vibrioides (strain ATCC 19089 / CIP 103742 / CB 15) (Caulobacter crescentus).